The chain runs to 219 residues: Cyclin-U4-3 (219 aa).

The protein belongs to the cyclin family. Cyclin U/P subfamily. In terms of assembly, interacts with CDKA-1. In terms of tissue distribution, expressed at low levels in roots, stems and flowers. Expressed in the shoot apex, leaf primordia and young leaves.

The sequence is that of Cyclin-U4-3 (CYCU4-3) from Arabidopsis thaliana (Mouse-ear cress).